An 809-amino-acid chain; its full sequence is MSTHPKFTRVPSIRDRVQDTLSAHRNELISLLSRYVAQGKGILQPHNLIDELDNILGEDHATLDLKNGPFGQIINSAQEAIVLPPFVAIAVRPRPGVWEYVRVNVFELSVEQLSVSEYLSFKEELVEGKSNDNIILELDLEPFNASFPRPTRSSSIGNGVQFLNRHLSSNMFRNKDCLEPLLDFLRVHTYKGHALMLNDRIQSISKLQSALVKAEDHLSKLAPDTLYSEFEYELQGTGFERGWGDTAARVLEMMHLLLDILQAPDPSTLETFLGRVPMVFNVVILSPHGFFGQANVLGLPDTGGQVVYILDQVRALESEMLVRIKKQGLDFTPRILIVTRLIPDAKGTTCNQRLERVSGTEYTHILRVPFRSEKGILRKWISRFDVWPFLETFAEDVASEIAAELQCYPDFIIGNYSDGNLVASLLAYKMGVTQCTIAHALEKTKYPDSDIYWKKFEDKYHFSCQFTADLIAMNNADFIITSTYQEIAGTKNTIGQYESHTAFTLPGLYRVVHGIDVFDPKFNIVSPGADMTIYFPYSDKEKRLTALHSSIEKLLYGTEQTDEYIGSLTDRSKPIIFSMARLDRVKNITGLVESYAKNSKLRELVNLVVVAGYIDVKKSSDREEIEEIEKMHDLMKQYNLNGEFRWITAQTNRARNGELYRYIADTKGAFVQPAFYEAFGLTVVEAMTCGLPTFATNHGGPAEIIEHGVSGFHIDPYHPDQASELLVDFFQRCKEDPNHWNKVSDGGLQRIYERYTWKIYSERLMTLAGVYSFWKYVSKLERRETRRYLEMFYILKFRDLANSVPIAKG.

The interval 278–756 (MVFNVVILSP…GLQRIYERYT (479 aa)) is GT-B glycosyltransferase.

This sequence belongs to the glycosyltransferase 1 family. Plant sucrose synthase subfamily.

The catalysed reaction is an NDP-alpha-D-glucose + D-fructose = a ribonucleoside 5'-diphosphate + sucrose + H(+). Sucrose-cleaving enzyme that provides UDP-glucose and fructose for various metabolic pathways. The sequence is that of Sucrose synthase 2 (SUS2) from Pisum sativum (Garden pea).